A 122-amino-acid chain; its full sequence is uncharacterized protein (122 aa).

This is an uncharacterized protein from Aquifex aeolicus (strain VF5).